Consider the following 466-residue polypeptide: Ribulose bisphosphate carboxylase large chain (466 aa).

Position 5 is an N6,N6,N6-trimethyllysine (Lys5). Residues Asn114 and Thr164 each coordinate substrate. Lys166 acts as the Proton acceptor in catalysis. Lys168 contacts substrate. The Mg(2+) site is built by Lys192, Asp194, and Glu195. Lys192 carries the N6-carboxylysine modification. Catalysis depends on His285, which acts as the Proton acceptor. Arg286, His318, and Ser370 together coordinate substrate.

The protein belongs to the RuBisCO large chain family. Type I subfamily. In terms of assembly, heterohexadecamer of 8 large chains and 8 small chains; disulfide-linked. The disulfide link is formed within the large subunit homodimers. Mg(2+) is required as a cofactor. The disulfide bond which can form in the large chain dimeric partners within the hexadecamer appears to be associated with oxidative stress and protein turnover.

The protein resides in the plastid. It localises to the chloroplast. It catalyses the reaction 2 (2R)-3-phosphoglycerate + 2 H(+) = D-ribulose 1,5-bisphosphate + CO2 + H2O. The catalysed reaction is D-ribulose 1,5-bisphosphate + O2 = 2-phosphoglycolate + (2R)-3-phosphoglycerate + 2 H(+). RuBisCO catalyzes two reactions: the carboxylation of D-ribulose 1,5-bisphosphate, the primary event in carbon dioxide fixation, as well as the oxidative fragmentation of the pentose substrate in the photorespiration process. Both reactions occur simultaneously and in competition at the same active site. In Gonopterodendron arboreum (Maracaibo lignum-vitae), this protein is Ribulose bisphosphate carboxylase large chain.